The chain runs to 115 residues: C-type natriuretic peptide prohormone (115 aa).

Residues 24 to 49 (PSDELNNEAEEMSPAASLPELNADQS) are disordered. A disulfide bridge connects residues C99 and C115.

It belongs to the natriuretic peptide family. In terms of tissue distribution, CNP-115 is differentially processed to produce CNP-38 and CNP-39 in the heart and CNP-22 in the brain.

The protein resides in the secreted. Hormone which may be vasoactive and natriuretic. Has a cGMP-stimulating activity. The sequence is that of C-type natriuretic peptide prohormone from Scyliorhinus canicula (Small-spotted catshark).